We begin with the raw amino-acid sequence, 172 residues long: MEYFNVGKIVNTQGLQGEMRVLSVSDFAEERFKKGSQLALFDDKDRFVQEVTIVSHRKQKHFDIIKFKDMYHINAIEKYKGYTLKVSKDNQGDLQEGEFYYHQIIGMAVYEKDVLIGHVKEILQPGANDVWIVKRQGKRDLLLPYIPPVVLNVDVPNKRVDVELMEGLDDED.

The PRC barrel domain maps to 96–168 (EGEFYYHQII…RVDVELMEGL (73 aa)).

The protein belongs to the RimM family. As to quaternary structure, binds ribosomal protein uS19.

The protein localises to the cytoplasm. In terms of biological role, an accessory protein needed during the final step in the assembly of 30S ribosomal subunit, possibly for assembly of the head region. Essential for efficient processing of 16S rRNA. May be needed both before and after RbfA during the maturation of 16S rRNA. It has affinity for free ribosomal 30S subunits but not for 70S ribosomes. This Streptococcus pyogenes serotype M1 protein is Ribosome maturation factor RimM.